We begin with the raw amino-acid sequence, 160 residues long: Lipoprotein signal peptidase (160 aa).

2 helical membrane passes run I60–I80 and L84–V104. Residues D118 and D132 contribute to the active site. Residues F128–V148 traverse the membrane as a helical segment.

Belongs to the peptidase A8 family.

It localises to the cell membrane. The catalysed reaction is Release of signal peptides from bacterial membrane prolipoproteins. Hydrolyzes -Xaa-Yaa-Zaa-|-(S,diacylglyceryl)Cys-, in which Xaa is hydrophobic (preferably Leu), and Yaa (Ala or Ser) and Zaa (Gly or Ala) have small, neutral side chains.. The protein operates within protein modification; lipoprotein biosynthesis (signal peptide cleavage). This protein specifically catalyzes the removal of signal peptides from prolipoproteins. This chain is Lipoprotein signal peptidase, found in Dehalococcoides mccartyi (strain CBDB1).